The primary structure comprises 255 residues: Accessory gland-specific peptide 26Aa (255 aa).

An N-terminal signal peptide occupies residues M1–A18. A disordered region spans residues P86–Q110. The span at I87–Q110 shows a compositional bias: polar residues. N-linked (GlcNAc...) asparagine glycosylation is found at N88, N95, and N136. Disordered stretches follow at residues N177–I196 and N235–T255. Basic residues predominate over residues K183–P192. Polar residues predominate over residues K245–T255.

Post-translationally, it undergoes several cleavages as it is secreted and it is further processed in the recipient female. Main cells of the accessory glands of males.

The protein resides in the secreted. It localises to the extracellular space. In terms of biological role, this protein is transferred from male to female's hemolymph during mating, affecting egglaying and behavior after mating. The sequence is that of Accessory gland-specific peptide 26Aa (Acp26Aa) from Drosophila sechellia (Fruit fly).